Here is a 517-residue protein sequence, read N- to C-terminus: Crotonobetaine/carnitine--CoA ligase (517 aa).

This sequence belongs to the ATP-dependent AMP-binding enzyme family.

The enzyme catalyses 4-(trimethylamino)butanoate + ATP + CoA = 4-(trimethylamino)butanoyl-CoA + AMP + diphosphate. The catalysed reaction is crotonobetaine + ATP + CoA = crotonobetainyl-CoA + AMP + diphosphate. It catalyses the reaction (R)-carnitine + ATP + CoA = (R)-carnitinyl-CoA + AMP + diphosphate. It functions in the pathway amine and polyamine metabolism; carnitine metabolism. Catalyzes the transfer of CoA to carnitine, generating the initial carnitinyl-CoA needed for the CaiB reaction cycle. Also has activity toward crotonobetaine and gamma-butyrobetaine. The sequence is that of Crotonobetaine/carnitine--CoA ligase from Salmonella agona (strain SL483).